Reading from the N-terminus, the 95-residue chain is MNSKLTALIFLGLVAIASCGWINEEKIQKKIDEKIGNNILGGMAKAVVHKLAKGEFQCVANIDTMGNCETHCQKTSGEKGFCHGTKCKCGKPLSY.

The signal sequence occupies residues 1–19; it reads MNSKLTALIFLGLVAIASC. The region spanning 55–95 is the BetaSPN-type CS-alpha/beta domain; sequence EFQCVANIDTMGNCETHCQKTSGEKGFCHGTKCKCGKPLSY. Disulfide bonds link Cys58-Cys82, Cys68-Cys87, and Cys72-Cys89.

Belongs to the long chain scorpion toxin family. Class 3 subfamily. Post-translationally, contains 3 disulfide bonds. In terms of tissue distribution, expressed by the venom gland.

It localises to the secreted. Functionally, has antibacterial activity against B.subtilis, K.pneumoniae and P.aeruginosa. This is Heteroscorpine-1 from Heterometrus laoticus (Thai giant scorpion).